The primary structure comprises 646 residues: Esterase EstA (646 aa).

The N-terminal stretch at 1 to 24 (MIRMALKPLVAACLLASLSTAPQA) is a signal peptide. The Extracellular portion of the chain corresponds to 25-397 (APSPYSTLVV…DSAASGDGNG (373 aa)). S38 acts as the Nucleophile in catalysis. Active-site residues include D310 and H313. Positions 366–646 (QNVGQWRGFV…SVSLALSLDF (281 aa)) constitute an Autotransporter domain. A beta stranded membrane pass occupies residues 398 to 408 (YNLTLGGSYRI). Over 409–410 (DE) the chain is Periplasmic. The chain crosses the membrane as a beta stranded span at residues 411-421 (AWRAGVAAGFY). Over 422–437 (RQKLEAGAKDSDYRMN) the chain is Extracellular. A beta stranded membrane pass occupies residues 438–447 (SYMASAFVQY). The Periplasmic segment spans residues 448-451 (QENR). A beta stranded membrane pass occupies residues 452-461 (WWADAALTGG). At 462–488 (YLDYDDLKRKFALGGGERSEKGDTNGH) the chain is on the extracellular side. Residues 489–500 (LWAFSARLGYDI) form a beta stranded membrane-spanning segment. At 501 to 507 (AQQADSP) the chain is on the periplasmic side. A beta stranded transmembrane segment spans residues 508–518 (WHLSPFVSADY). The Extracellular portion of the chain corresponds to 519–547 (ARVEVDGYSEKGASATALDYDDQKRSSKR). A beta stranded membrane pass occupies residues 548–558 (LGAGLQGKYAF). The Periplasmic segment spans residues 559–561 (GSD). A beta stranded membrane pass occupies residues 562 to 571 (TQLFAEYAHE). At 572–605 (REYEDDTQDLTMSLNSLPGNRFTLEGYTPQDHLN) the chain is on the extracellular side. The chain crosses the membrane as a beta stranded span at residues 606-615 (RVSLGFSQKL). Residues 616 to 618 (APE) are Periplasmic-facing. The beta stranded transmembrane segment at 619–628 (LSLRGGYNWR) threads the bilayer. Over 629-636 (KGEDDTQQ) the chain is Extracellular. A beta stranded transmembrane segment spans residues 637–646 (SVSLALSLDF).

This sequence belongs to the 'GDSL' lipolytic enzyme family.

Its subcellular location is the cell outer membrane. The catalysed reaction is a carboxylic ester + H2O = an alcohol + a carboxylate + H(+). Functionally, esterase whose enzymatic activity is required for rhamnolipid production, all kinds of cell motility (swimming, swarming, and twitching), and biofilm formation; the exact role of EstA in these processes is unclear. In vitro, has pronounced esterase activities towards p-nitrophenyl esters of short acyl chain length (C4-C6) and Tween detergents. Also shows relatively high activity towards beta-naphthyl butyrate, whereas its activities towards triacylglycerols and acyls-CoA are negligible. The polypeptide is Esterase EstA (estA) (Pseudomonas aeruginosa (strain ATCC 15692 / DSM 22644 / CIP 104116 / JCM 14847 / LMG 12228 / 1C / PRS 101 / PAO1)).